The sequence spans 335 residues: Protein STRICTOSIDINE SYNTHASE-LIKE 12 (335 aa).

Positions 1 to 22 (MTSFCSMISLLLLLSLSSAVFS) are cleaved as a signal peptide. Asn80 carries N-linked (GlcNAc...) asparagine glycosylation.

Belongs to the strictosidine synthase family.

The protein resides in the vacuole. It catalyses the reaction 3alpha(S)-strictosidine + H2O = secologanin + tryptamine. It functions in the pathway alkaloid biosynthesis; 3alpha(S)-strictosidine biosynthesis; 3alpha(S)-strictosidine from secologanin and tryptamine: step 1/1. Its function is as follows. Catalyzes the stereospecific condensation of tryptamine with secologanin to form strictosidine, the key intermediate of indole alkaloid biosynthesis. This is Protein STRICTOSIDINE SYNTHASE-LIKE 12 from Arabidopsis thaliana (Mouse-ear cress).